A 466-amino-acid polypeptide reads, in one-letter code: Asparagine--tRNA ligase (466 aa).

Belongs to the class-II aminoacyl-tRNA synthetase family. As to quaternary structure, homodimer.

Its subcellular location is the cytoplasm. The catalysed reaction is tRNA(Asn) + L-asparagine + ATP = L-asparaginyl-tRNA(Asn) + AMP + diphosphate + H(+). The polypeptide is Asparagine--tRNA ligase (Vibrio parahaemolyticus serotype O3:K6 (strain RIMD 2210633)).